The chain runs to 248 residues: tRNA pseudouridine synthase A (248 aa).

The active-site Nucleophile is the D53. Y111 lines the substrate pocket.

This sequence belongs to the tRNA pseudouridine synthase TruA family. As to quaternary structure, homodimer.

It catalyses the reaction uridine(38/39/40) in tRNA = pseudouridine(38/39/40) in tRNA. Its function is as follows. Formation of pseudouridine at positions 38, 39 and 40 in the anticodon stem and loop of transfer RNAs. The polypeptide is tRNA pseudouridine synthase A (Listeria monocytogenes serotype 4b (strain CLIP80459)).